Consider the following 500-residue polypeptide: Ferulic acid decarboxylase 1 (500 aa).

Mn(2+) is bound by residues Asn-168, His-191, and Glu-233. Prenylated FMN-binding positions include 168–173 (NWSIAR), 190–191 (QH), and Glu-233. The active-site Proton donor is the Glu-282. Lys-391 provides a ligand contact to prenylated FMN.

The protein belongs to the UbiD family. UbiD-like/FDC subfamily. As to quaternary structure, homodimer. May form higher order oligomers. It depends on Mn(2+) as a cofactor. The cofactor is prenylated FMN.

Its subcellular location is the cytoplasm. It catalyses the reaction (E)-4-coumarate + H(+) = 4-vinylphenol + CO2. It carries out the reaction (E)-cinnamate + H(+) = styrene + CO2. The enzyme catalyses (E)-ferulate + H(+) = 2-methoxy-4-vinylphenol + CO2. Functionally, catalyzes the reversible decarboxylation of aromatic carboxylic acids like ferulic acid, p-coumaric acid or cinnamic acid, producing the corresponding vinyl derivatives 4-vinylphenol, 4-vinylguaiacol, and styrene, respectively, which play the role of aroma metabolites. The polypeptide is Ferulic acid decarboxylase 1 (Aspergillus niger (strain ATCC MYA-4892 / CBS 513.88 / FGSC A1513)).